Reading from the N-terminus, the 836-residue chain is Lon protease (836 aa).

Positions 41–233 (LPVLPLRNTV…RLIHFLNREV (193 aa)) constitute a Lon N-terminal domain. 385-392 (GPPGVGKT) provides a ligand contact to ATP. One can recognise a Lon proteolytic domain in the interval 627–811 (VMLSGVAVGL…DDLIDYVLEP (185 aa)). Catalysis depends on residues S714 and K757. A disordered region spans residues 816 to 836 (APQFKVEDKDHTPETTGNESE).

Belongs to the peptidase S16 family. In terms of assembly, homohexamer. Organized in a ring with a central cavity.

Its subcellular location is the cytoplasm. The catalysed reaction is Hydrolysis of proteins in presence of ATP.. In terms of biological role, ATP-dependent serine protease that mediates the selective degradation of mutant and abnormal proteins as well as certain short-lived regulatory proteins. Required for cellular homeostasis and for survival from DNA damage and developmental changes induced by stress. Degrades polypeptides processively to yield small peptide fragments that are 5 to 10 amino acids long. Binds to DNA in a double-stranded, site-specific manner. This chain is Lon protease, found in Chloroherpeton thalassium (strain ATCC 35110 / GB-78).